A 1001-amino-acid chain; its full sequence is MKKIRINELARELEVKAHEILERLPELGVTEKKTHSSSIDEDVAIKLRQYYGQDVPDYVHDPNAVDEPATEAHEERHEHEEAHEPAAAPKAAVEPETPVAPAPEAAPAAKEERPAPEEPARPMAPIRPPLASGRPIHPPVGATPPPRPEGPRAAPAPPLPPPAPQVPHAPSPAASSPAMPARPEPPAHHPPSQTPPAAVFAPGRPAPPSAKPLPTTTPRPGQVLSGPRQPFPSSPAPGAPQRPQAIPRPPQQVRPESQRPSGPGAPSAPQRPLAGQPAARPVVPPRPDLVAKLSAPRAPVMPQQPAAPRPGVPKAPSAPVPGQPIYRGPIRPGQPMVAKPGVRPGMPPSRPGGPRPQHPTSRGRIEPGMGAPPPPAEPSRGRPGDRRPVRQQRERTEEEKILRPQRRHVEAGPPPISREITISEGITVKELSEKLDVKANLVMKKLMDRGIFVAINQTLDGKLATEVARDFGASTATVSYEVEAMQSVEEAQDTTDLERRAPVVTIMGHVDHGKTSLLDAIREANVAGREAGGITQHIGAYQVEMKGRKIVFIDTPGHEAFTRMRSRGAKVTDIVILVVAADDGVMPQTLEAIDHAKAAAVPIIVAINKIDKADAQPERIKQQLSDRGLLPEDWGGDVVMVPVSARTQQGLPDLLEMILLVADMQDLKANPSRPAMGTVIEAQLDRGRGPVATVLVRNGTLSVGDFFICGAVFGKVRAMLNDRGTQIRKAEPSTPVEVLGLDSLPEAGDDFQVVTDTAKAKQIVNFRDQRQKEAALAKSSRITLEQLHQQMREGEVKELPVIIKADVGGSAEVLKETLEKLSNDKVKVRVIHSGVGAINESDILLASASNAIVIGFNVRPERNAAATAEQEKVDVRLHTIIYNLTDEIKRAMSGLLAPVFKEVYRGKAEVRETFRISKVGAVAGCQVIDGSIPRDSECRVLRDNIVVHTGKIGSLRRFKDDVSEVKIGMECGITLANFADLKQGDIIEAFATERVATEVFA.

The segment at 56 to 418 is disordered; that stretch reads PDYVHDPNAV…VEAGPPPISR (363 aa). Positions 70 to 84 are enriched in basic and acidic residues; it reads TEAHEERHEHEEAHE. A compositionally biased stretch (low complexity) spans 85–108; the sequence is PAAAPKAAVEPETPVAPAPEAAPA. Residues 109–120 are compositionally biased toward basic and acidic residues; sequence AKEERPAPEEPA. Composition is skewed to pro residues over residues 136 to 170, 180 to 194, 204 to 217, 229 to 252, 305 to 322, and 345 to 357; these read IHPP…PHAP, PARP…PSQT, RPAP…PTTT, QPFP…PPQQ, PAAP…PVPG, and GMPP…PRPQ. A compositionally biased stretch (basic and acidic residues) spans 379–410; sequence SRGRPGDRRPVRQQRERTEEEKILRPQRRHVE. The 170-residue stretch at 499 to 668 folds into the tr-type G domain; it reads RRAPVVTIMG…LLVADMQDLK (170 aa). The G1 stretch occupies residues 508–515; the sequence is GHVDHGKT. GTP is bound at residue 508–515; that stretch reads GHVDHGKT. The G2 stretch occupies residues 533-537; the sequence is GITQH. The G3 stretch occupies residues 554 to 557; it reads DTPG. GTP is bound by residues 554–558 and 608–611; these read DTPGH and NKID. A G4 region spans residues 608 to 611; that stretch reads NKID. Residues 644–646 are G5; sequence SAR.

This sequence belongs to the TRAFAC class translation factor GTPase superfamily. Classic translation factor GTPase family. IF-2 subfamily.

The protein resides in the cytoplasm. One of the essential components for the initiation of protein synthesis. Protects formylmethionyl-tRNA from spontaneous hydrolysis and promotes its binding to the 30S ribosomal subunits. Also involved in the hydrolysis of GTP during the formation of the 70S ribosomal complex. In Solibacter usitatus (strain Ellin6076), this protein is Translation initiation factor IF-2.